A 249-amino-acid chain; its full sequence is 2,3-bisphosphoglycerate-dependent phosphoglycerate mutase (249 aa).

Substrate is bound by residues 11 to 18, 24 to 25, Arg63, 90 to 93, Lys101, 117 to 118, and 185 to 186; these read RHGNSEWN, TG, ERHY, RR, and GN. The active-site Tele-phosphohistidine intermediate is the His12. Glu90 functions as the Proton donor/acceptor in the catalytic mechanism.

Belongs to the phosphoglycerate mutase family. BPG-dependent PGAM subfamily.

The enzyme catalyses (2R)-2-phosphoglycerate = (2R)-3-phosphoglycerate. Its pathway is carbohydrate degradation; glycolysis; pyruvate from D-glyceraldehyde 3-phosphate: step 3/5. Catalyzes the interconversion of 2-phosphoglycerate and 3-phosphoglycerate. In Leifsonia xyli subsp. xyli (strain CTCB07), this protein is 2,3-bisphosphoglycerate-dependent phosphoglycerate mutase.